A 156-amino-acid chain; its full sequence is Small ribosomal subunit protein uS7 (156 aa).

It belongs to the universal ribosomal protein uS7 family. As to quaternary structure, part of the 30S ribosomal subunit. Contacts proteins S9 and S11.

Functionally, one of the primary rRNA binding proteins, it binds directly to 16S rRNA where it nucleates assembly of the head domain of the 30S subunit. Is located at the subunit interface close to the decoding center, probably blocks exit of the E-site tRNA. The protein is Small ribosomal subunit protein uS7 of Histophilus somni (strain 129Pt) (Haemophilus somnus).